We begin with the raw amino-acid sequence, 317 residues long: tRNA(Ile)-lysidine synthase (317 aa).

30–35 (SGGSDS) contributes to the ATP binding site.

Belongs to the tRNA(Ile)-lysidine synthase family.

The protein localises to the cytoplasm. It catalyses the reaction cytidine(34) in tRNA(Ile2) + L-lysine + ATP = lysidine(34) in tRNA(Ile2) + AMP + diphosphate + H(+). In terms of biological role, ligates lysine onto the cytidine present at position 34 of the AUA codon-specific tRNA(Ile) that contains the anticodon CAU, in an ATP-dependent manner. Cytidine is converted to lysidine, thus changing the amino acid specificity of the tRNA from methionine to isoleucine. The protein is tRNA(Ile)-lysidine synthase of Chlamydia abortus (strain DSM 27085 / S26/3) (Chlamydophila abortus).